We begin with the raw amino-acid sequence, 1384 residues long: Contactin-associated protein 1 (1384 aa).

The N-terminal stretch at methionine 1–glycine 19 is a signal peptide. At tryptophan 20 to alanine 1283 the chain is on the extracellular side. In terms of domain architecture, F5/8 type C spans cysteine 25 to cysteine 168. A disulfide bridge links cysteine 25 with cysteine 168. Asparagine 120, asparagine 128, and asparagine 276 each carry an N-linked (GlcNAc...) asparagine glycan. 2 consecutive Laminin G-like domains span residues phenylalanine 203 to cysteine 355 and phenylalanine 389 to cysteine 538. A disulfide bridge links cysteine 323 with cysteine 355. 3 N-linked (GlcNAc...) asparagine glycosylation sites follow: asparagine 420, asparagine 499, and asparagine 518. 4 cysteine pairs are disulfide-bonded: cysteine 506-cysteine 538, cysteine 544-cysteine 555, cysteine 549-cysteine 564, and cysteine 566-cysteine 576. The region spanning isoleucine 540–histidine 577 is the EGF-like 1 domain. A Fibrinogen C-terminal domain is found at cysteine 576–alanine 795. 9 N-linked (GlcNAc...) asparagine glycosylation sites follow: asparagine 597, asparagine 653, asparagine 664, asparagine 763, asparagine 804, asparagine 843, asparagine 860, asparagine 948, and asparagine 956. The Laminin G-like 3 domain maps to phenylalanine 813 to asparagine 956. Intrachain disulfides connect cysteine 930/cysteine 957, cysteine 961/cysteine 974, cysteine 968/cysteine 983, and cysteine 985/cysteine 995. Residues cysteine 957 to asparagine 996 form the EGF-like 2 domain. Residues asparagine 1078 and asparagine 1147 are each glycosylated (N-linked (GlcNAc...) asparagine). Residues phenylalanine 1088–cysteine 1250 enclose the Laminin G-like 4 domain. An intrachain disulfide couples cysteine 1209 to cysteine 1250. The helical transmembrane segment at isoleucine 1284–phenylalanine 1304 threads the bilayer. The Cytoplasmic segment spans residues tyrosine 1305–glutamate 1384. The span at glutamate 1319–proline 1328 shows a compositional bias: basic and acidic residues. The segment at glutamate 1319–glutamate 1384 is disordered. Positions proline 1328–proline 1369 match the SH3-binding motif. Residues proline 1339 to serine 1355 are compositionally biased toward low complexity. Positions alanine 1356–glycine 1368 are enriched in pro residues. Serine 1383 is subject to Phosphoserine.

The protein belongs to the neurexin family. As to quaternary structure, interacts with CNTN1/contactin in cis form. As to expression, predominantly expressed in brain. Weak expression detected in ovary, pancreas, colon, lung, heart, intestine and testis.

The protein resides in the membrane. It is found in the cell junction. It localises to the paranodal septate junction. Required, with CNTNAP2, for radial and longitudinal organization of myelinated axons. Plays a role in the formation of functional distinct domains critical for saltatory conduction of nerve impulses in myelinated nerve fibers. Demarcates the paranodal region of the axo-glial junction. In association with contactin involved in the signaling between axons and myelinating glial cells. This is Contactin-associated protein 1 (CNTNAP1) from Homo sapiens (Human).